The primary structure comprises 346 residues: KH domain-containing, RNA-binding, signal transduction-associated protein 2 (346 aa).

Residues 65-131 (LIPVQQYPKF…AKYAHLSNDL (67 aa)) form the KH domain. The interval 175–291 (LSYLNGSDDP…SYESYDDNYS (117 aa)) is disordered. Residues 195–224 (LRLTSTASPRGRGSAAPPAPPGRGAAAPRG) are compositionally biased toward low complexity. A compositionally biased stretch (acidic residues) spans 268-287 (YGYDDGYDGEYDDQSYESYD).

It belongs to the KHDRBS family.

It localises to the nucleus. RNA-binding protein that plays a role in the regulation of alternative splicing. The chain is KH domain-containing, RNA-binding, signal transduction-associated protein 2 (khdrbs2) from Danio rerio (Zebrafish).